The following is a 288-amino-acid chain: Serine/threonine-protein acetyltransferase YopJ (288 aa).

Catalysis depends on residues histidine 109 and glutamate 128. Residue histidine 109 coordinates CoA. 167–168 (RS) contributes to the CoA binding site. The active site involves cysteine 172. Residues 182–185 (KLYI) and 224–225 (KH) each bind 1D-myo-inositol hexakisphosphate. 227-230 (QGKK) is a binding site for CoA. Residue arginine 257 participates in 1D-myo-inositol hexakisphosphate binding. 266-270 (DGKEL) lines the CoA pocket.

Belongs to the acetyltransferase YopJ family. The cofactor is 1D-myo-inositol hexakisphosphate.

The protein localises to the secreted. It catalyses the reaction L-threonyl-[protein] + acetyl-CoA = O-acetyl-L-threonyl-[protein] + CoA. It carries out the reaction L-seryl-[protein] + acetyl-CoA = O-acetyl-L-seryl-[protein] + CoA. With respect to regulation, 1D-myo-inositol hexakisphosphate activates protein-acetyltransferase activity via an allosteric mechanism: 1D-myo-inositol hexakisphosphate-binding induces a conformational rearrangement that stimulates the interaction with acetyl-CoA. In terms of biological role, serine/threonine-protein acetyltransferase translocated into infected cells, which inhibits the host immune response and induces cell death by mediating acetylation of target proteins. Inhibits the MAPK and NF-kappa-B signaling pathways by acetylating protein-kinases such as MAP2K1, MAP2K6, MAP3K7/TAK1 and I-kappa-B kinase (CHUK/IKKA and IKBKB) on serine and threonine residues critical for their activation by phosphorylation, thereby preventing protein-kinase activation. Promotes pyroptosis, a programmed cell death, in host cells by mediating acetylation of MAP3K7/TAK1: MAP3K7/TAK1 inactivation triggers activation of caspase-8 (CASP8), followed by CASP8-dependent cleavage of gasdermin-D (GSDMD) and induction of pyroptosis. Also able to induce intestinal barrier dysfunction by acetylating and inhibiting host protein-kinases RIPK2/RICK and MAP3K7/TAK1, thereby promoting cell death. This is Serine/threonine-protein acetyltransferase YopJ from Yersinia pseudotuberculosis serotype I (strain IP32953).